Reading from the N-terminus, the 68-residue chain is Large ribosomal subunit protein uL30 (68 aa).

This sequence belongs to the universal ribosomal protein uL30 family. In terms of assembly, part of the 50S ribosomal subunit.

The protein is Large ribosomal subunit protein uL30 of Kocuria rhizophila (strain ATCC 9341 / DSM 348 / NBRC 103217 / DC2201).